Consider the following 277-residue polypeptide: Phosphoenolpyruvate synthase regulatory protein (277 aa).

G157 to T164 contacts ADP.

The protein belongs to the pyruvate, phosphate/water dikinase regulatory protein family. PSRP subfamily.

It carries out the reaction [pyruvate, water dikinase] + ADP = [pyruvate, water dikinase]-phosphate + AMP + H(+). It catalyses the reaction [pyruvate, water dikinase]-phosphate + phosphate + H(+) = [pyruvate, water dikinase] + diphosphate. Functionally, bifunctional serine/threonine kinase and phosphorylase involved in the regulation of the phosphoenolpyruvate synthase (PEPS) by catalyzing its phosphorylation/dephosphorylation. The polypeptide is Phosphoenolpyruvate synthase regulatory protein (Salmonella agona (strain SL483)).